The chain runs to 360 residues: Isopentenyl-diphosphate delta-isomerase (360 aa).

12 to 13 is a substrate binding site; the sequence is RK. FMN is bound by residues Ser-70, 71–73, Ser-101, and Asn-130; that span reads SMT. 101–103 contacts substrate; the sequence is SMR. Gln-165 is a binding site for substrate. Residue Glu-166 participates in Mg(2+) binding. Residues Lys-197, 288–290, and 309–310 contribute to the FMN site; these read GIR and AG.

The protein belongs to the IPP isomerase type 2 family. As to quaternary structure, homooctamer. Dimer of tetramers. FMN is required as a cofactor. It depends on NADPH as a cofactor. The cofactor is Mg(2+).

Its subcellular location is the cytoplasm. It carries out the reaction isopentenyl diphosphate = dimethylallyl diphosphate. Its function is as follows. Involved in the biosynthesis of isoprenoids. Catalyzes the 1,3-allylic rearrangement of the homoallylic substrate isopentenyl (IPP) to its allylic isomer, dimethylallyl diphosphate (DMAPP). In Chlorobium limicola (strain DSM 245 / NBRC 103803 / 6330), this protein is Isopentenyl-diphosphate delta-isomerase.